We begin with the raw amino-acid sequence, 216 residues long: GTP cyclohydrolase-2 (216 aa).

GTP is bound at residue 51–55 (RIHSE). Zn(2+)-binding residues include C56, C67, and C69. GTP-binding positions include Q72, 94–96 (EGR), and T116. The Proton acceptor role is filled by D128. R130 functions as the Nucleophile in the catalytic mechanism. Positions 151 and 156 each coordinate GTP.

The protein belongs to the GTP cyclohydrolase II family. Zn(2+) serves as cofactor.

The catalysed reaction is GTP + 4 H2O = 2,5-diamino-6-hydroxy-4-(5-phosphoribosylamino)-pyrimidine + formate + 2 phosphate + 3 H(+). Its pathway is cofactor biosynthesis; riboflavin biosynthesis; 5-amino-6-(D-ribitylamino)uracil from GTP: step 1/4. Catalyzes the conversion of GTP to 2,5-diamino-6-ribosylamino-4(3H)-pyrimidinone 5'-phosphate (DARP), formate and pyrophosphate. The sequence is that of GTP cyclohydrolase-2 from Haemophilus influenzae (strain 86-028NP).